We begin with the raw amino-acid sequence, 466 residues long: Ribulose bisphosphate carboxylase large chain (466 aa).

Lysine 5 carries the post-translational modification N6,N6,N6-trimethyllysine. Asparagine 114 and threonine 164 together coordinate substrate. Lysine 166 acts as the Proton acceptor in catalysis. Lysine 168 is a binding site for substrate. 3 residues coordinate Mg(2+): lysine 192, aspartate 194, and glutamate 195. Lysine 192 carries the N6-carboxylysine modification. Histidine 285 acts as the Proton acceptor in catalysis. The substrate site is built by arginine 286, histidine 318, and serine 370.

Belongs to the RuBisCO large chain family. Type I subfamily. Heterohexadecamer of 8 large chains and 8 small chains; disulfide-linked. The disulfide link is formed within the large subunit homodimers. Mg(2+) is required as a cofactor. In terms of processing, the disulfide bond which can form in the large chain dimeric partners within the hexadecamer appears to be associated with oxidative stress and protein turnover.

Its subcellular location is the plastid. It is found in the chloroplast. It catalyses the reaction 2 (2R)-3-phosphoglycerate + 2 H(+) = D-ribulose 1,5-bisphosphate + CO2 + H2O. It carries out the reaction D-ribulose 1,5-bisphosphate + O2 = 2-phosphoglycolate + (2R)-3-phosphoglycerate + 2 H(+). Functionally, ruBisCO catalyzes two reactions: the carboxylation of D-ribulose 1,5-bisphosphate, the primary event in carbon dioxide fixation, as well as the oxidative fragmentation of the pentose substrate in the photorespiration process. Both reactions occur simultaneously and in competition at the same active site. The polypeptide is Ribulose bisphosphate carboxylase large chain (Adoxa moschatellina (Moschatel)).